Reading from the N-terminus, the 265-residue chain is MIESQRHSYHLVDPSPWPISGSLGALATTVGGVMYMHSFQGGARLLSLGLIFILYTMFVWWRDVLRESTLEGHHTKVVQLGLRYGFILFIVSEVMFFFAFFWAFFHSSLAPAVEIGGIWPPKGIEVLDPWEIPFLNTLILLSSGAAVTWAHHAILAGKEKRAVYALVATVLLALVFTGFQGMEYYQAPFTISDSIYGSTFFLATGFHGFHVIIGTLFLIICGIRQYLGHLTKEHHVGFEAAAWYWHFVDVVWLFLFVSIYWWGGI.

6 helical membrane passes run 41 to 61, 85 to 105, 137 to 157, 162 to 182, 200 to 220, and 245 to 265; these read GGAR…FVWW, GFIL…WAFF, TLIL…ILAG, AVYA…FQGM, FFLA…FLII, and WHFV…WGGI.

The protein belongs to the cytochrome c oxidase subunit 3 family. Component of the cytochrome c oxidase (complex IV, CIV), a multisubunit enzyme composed of a catalytic core of 3 subunits and several supernumerary subunits. The complex exists as a monomer or a dimer and forms supercomplexes (SCs) in the inner mitochondrial membrane with ubiquinol-cytochrome c oxidoreductase (cytochrome b-c1 complex, complex III, CIII).

It is found in the mitochondrion inner membrane. The catalysed reaction is 4 Fe(II)-[cytochrome c] + O2 + 8 H(+)(in) = 4 Fe(III)-[cytochrome c] + 2 H2O + 4 H(+)(out). Functionally, component of the cytochrome c oxidase, the last enzyme in the mitochondrial electron transport chain which drives oxidative phosphorylation. The respiratory chain contains 3 multisubunit complexes succinate dehydrogenase (complex II, CII), ubiquinol-cytochrome c oxidoreductase (cytochrome b-c1 complex, complex III, CIII) and cytochrome c oxidase (complex IV, CIV), that cooperate to transfer electrons derived from NADH and succinate to molecular oxygen, creating an electrochemical gradient over the inner membrane that drives transmembrane transport and the ATP synthase. Cytochrome c oxidase is the component of the respiratory chain that catalyzes the reduction of oxygen to water. Electrons originating from reduced cytochrome c in the intermembrane space (IMS) are transferred via the dinuclear copper A center (CU(A)) of subunit 2 and heme A of subunit 1 to the active site in subunit 1, a binuclear center (BNC) formed by heme A3 and copper B (CU(B)). The BNC reduces molecular oxygen to 2 water molecules using 4 electrons from cytochrome c in the IMS and 4 protons from the mitochondrial matrix. This chain is Cytochrome c oxidase subunit 3 (COX3), found in Arabidopsis thaliana (Mouse-ear cress).